The primary structure comprises 1615 residues: Ras-responsive element-binding protein 1 (1615 aa).

The tract at residues 1 to 44 (MMSAVMNVGKIAENGGTSQTVKSPSKSPAPNRIGRRNQETKEEK) is disordered. The span at 15-28 (GGTSQTVKSPSKSP) shows a compositional bias: polar residues. C2H2-type zinc fingers lie at residues 47-69 (YTCP…IRQH), 78-100 (HSCS…MLVH), and 106-128 (YKCS…MKIH). Positions 127-169 (IHEKDPNSTASTTPPSPLKAKRLSSKRKFSQDAEMDREERTPA) are disordered. Positions 145-154 (KAKRLSSKRK) are enriched in basic residues. 3 consecutive C2H2-type zinc fingers follow at residues 189 to 211 (YHCP…METH), 216 to 239 (LRCD…AVIH), and 297 to 319 (FICE…TETH). Residues 511 to 556 (SAQQASPGCISPSLPPPPLRLIKNSVETSSNSHLSQPGAKSSPSSQ) are disordered. The span at 535 to 549 (SVETSSNSHLSQPGA) shows a compositional bias: polar residues. C2H2-type zinc fingers lie at residues 622–644 (YPCR…IRSH), 650–672 (YQCN…LRTH), 732–754 (TVCK…MRTH), and 763–788 (FECK…QHLH). 3 disordered regions span residues 1025–1044 (AADA…KSGN), 1058–1104 (DSNL…VDLE), and 1123–1162 (KFSP…KRNT). Low complexity predominate over residues 1026–1036 (ADASPKAASSS). Residues 1082 to 1095 (TKKRGRKKGTKNKP) are compositionally biased toward basic residues. The span at 1123–1132 (KFSPFLQSTD) shows a compositional bias: polar residues. A C2H2-type 11 zinc finger spans residues 1170-1192 (ITCPYCPRVFSWASSLQRHMLTH). Disordered stretches follow at residues 1214–1269 (CEKE…KSLD) and 1313–1418 (LSRH…DKRK). A compositionally biased stretch (acidic residues) spans 1242-1262 (PAEEDAEEKADEYEEGPEEDS). The C2H2-type 12 zinc-finger motif lies at 1298-1320 (HACDVCGKTFKFAGALSRHKKAH). 2 stretches are compositionally biased toward basic and acidic residues: residues 1321–1339 (IRED…KSIQ) and 1388–1414 (GTER…TAKA). 2 C2H2-type zinc fingers span residues 1419–1441 (KVCT…MRSH) and 1447–1469 (YKCQ…QRIH). Positions 1464–1477 (RHQRIHQKVKNTRN) are enriched in basic residues. The segment at 1464–1585 (RHQRIHQKVK…SELERPSGFI (122 aa)) is disordered. 2 stretches are compositionally biased toward basic and acidic residues: residues 1478 to 1493 (HGKE…RCGE) and 1566 to 1580 (PAKD…ELER).

The protein belongs to the krueppel C2H2-type zinc-finger protein family. In terms of tissue distribution, broadly expressed, except in brain.

The protein localises to the nucleus. Its function is as follows. Transcription factor that binds specifically to the RAS-responsive elements (RRE) of gene promoters. The polypeptide is Ras-responsive element-binding protein 1 (RREB1) (Gallus gallus (Chicken)).